A 436-amino-acid chain; its full sequence is Nucleolar protein 4-like (436 aa).

The interval 1-184 (MSDSTWMSAD…KMNDSEGMDP (184 aa)) is disordered. The span at 41–61 (SESGSGNGSSTLNPSTSSSTQ) shows a compositional bias: low complexity. A Phosphoserine modification is found at Ser130. Positions 160 to 169 (ADDDDDDHDD) are enriched in acidic residues. Basic and acidic residues predominate over residues 170-184 (HEDNDKMNDSEGMDP). Ser295 is subject to Phosphoserine. The span at 351–366 (QPPASLQTGNHSNGPT) shows a compositional bias: polar residues. The disordered stretch occupies residues 351–400 (QPPASLQTGNHSNGPTDLSMKGGASTTSTTPTPTPSSTSTSRPVPTAQLS). The span at 375-396 (STTSTTPTPTPSSTSTSRPVPT) shows a compositional bias: low complexity.

The chain is Nucleolar protein 4-like (NOL4L) from Homo sapiens (Human).